A 1941-amino-acid polypeptide reads, in one-letter code: Myosin light chain kinase, smooth muscle (1941 aa).

Ig-like C2-type domains are found at residues Pro-33–Thr-122 and Pro-156–Ser-244. Cys-177 and Cys-228 form a disulfide bridge. Phosphotyrosine; by ABL1 is present on Tyr-226. Positions Ala-255 to Gln-329 are disordered. Residues Asn-286–Lys-305 are compositionally biased toward polar residues. At Ser-295 the chain carries Phosphoserine. Positions Ser-306–Arg-320 are enriched in basic and acidic residues. Residues Ser-333 and Ser-355 each carry the phosphoserine modification. Ig-like C2-type domains follow at residues Pro-402 to Ser-485, Pro-502 to Thr-587, Pro-611 to Thr-699, and Pro-709 to Arg-809. Intrachain disulfides connect Cys-423–Cys-475 and Cys-523–Cys-571. Tyr-452 is subject to Phosphotyrosine; by ABL1 and SRC. A disulfide bridge connects residues Cys-730 and Cys-793. Phosphotyrosine; by ABL1 is present on Tyr-780. 4 tandem repeats follow at residues Asp-856–Leu-883, Asp-884–Met-911, Asp-912–Val-939, and Asp-940–Pro-966. Residues Asp-856 to Asn-985 are 5 X 28 AA approximate tandem repeats. The tract at residues Met-911–Pro-951 is actin-binding (calcium/calmodulin-sensitive). A disordered region spans residues Gln-920–Pro-1120. A Phosphoserine modification is found at Ser-935. The segment at Pro-936–Pro-951 is calmodulin-binding. The 1-5; truncated repeat unit spans residues Asp-967–Asn-985. Tandem repeats lie at residues Leu-990 to Gly-1002, Asp-1003 to Gly-1014, Asn-1015 to Gly-1026, Asn-1027 to Gly-1038, and Asn-1039 to Ile-1049. The 5 X 12 AA approximate tandem repeats stretch occupies residues Leu-990–Ile-1049. The tract at residues Pro-1048–Val-1482 is actin-binding (calcium/calmodulin-insensitive). Polar residues predominate over residues Ala-1052 to Gln-1065. A compositionally biased stretch (basic and acidic residues) spans Ala-1085–Cys-1099. One can recognise an Ig-like C2-type 7 domain in the interval Pro-1120 to Thr-1208. A disulfide bond links Cys-1141 and Cys-1192. Residues Ala-1212–Ala-1257 are disordered. Positions Pro-1260 to Thr-1348 constitute an Ig-like C2-type 8 domain. A Fibronectin type-III domain is found at Pro-1356 to Lys-1449. The segment at Ser-1435 to Val-1469 is disordered. Over residues Pro-1453 to Pro-1467 the composition is skewed to acidic residues. At Ser-1460 the chain carries Phosphoserine. A Phosphotyrosine; by ABL1 modification is found at Tyr-1471. A Protein kinase domain is found at Tyr-1486–Leu-1741. Residues Leu-1492–Val-1500 and Lys-1515 contribute to the ATP site. Tyr-1597 carries the phosphotyrosine; by ABL1 modification. Asp-1607 serves as the catalytic Proton acceptor. A Phosphotyrosine; by ABL1 modification is found at Tyr-1657. Residues Thr-1733–Thr-1796 form a calmodulin-binding region. Phosphoserine occurs at positions 1781, 1782, 1794, 1795, and 1798. Residues Leu-1789–Glu-1809 are disordered. Over residues Arg-1792–Ile-1803 the composition is skewed to polar residues. Thr-1800 bears the Phosphothreonine mark. Ser-1801 carries the phosphoserine modification. The Ig-like C2-type 9 domain occupies Pro-1831–Ile-1920. Cys-1852 and Cys-1904 form a disulfide bridge.

It belongs to the protein kinase superfamily. CAMK Ser/Thr protein kinase family. All isoforms including Telokin bind calmodulin. Interacts with CTTN; this interaction is reduced during thrombin-induced endothelial cell (EC) contraction but is promoted by the barrier-protective agonist sphingosine 1-phosphate (S1P) within lamellipodia. A complex made of ABL1, CTTN and MYLK regulates cortical actin-based cytoskeletal rearrangement critical to sphingosine 1-phosphate (S1P)-mediated endothelial cell (EC) barrier enhancement. Binds to NAA10/ARD1. Interacts with SVIL and PTK2B/PYK2. The cofactor is Mg(2+). Requires Ca(2+) as cofactor. Post-translationally, can probably be down-regulated by phosphorylation. Tyrosine phosphorylation by ABL1 increases kinase activity, reverses MLCK-mediated inhibition of Arp2/3-mediated actin polymerization, and enhances CTTN-binding. Phosphorylation by SRC at Tyr-452 promotes CTTN binding. The C-terminus is deglutamylated by AGTPBP1/CCP1, AGBL1/CCP4 and AGBL4/CCP6, leading to the formation of Myosin light chain kinase, smooth muscle, deglutamylated form. The consequences of C-terminal deglutamylation are unknown. In terms of tissue distribution, smooth muscle isoform is expressed in all tissues with highest levels in bladder, uterus, vas deferens, colon, ileum, and tracheae. Isoform 1 is expressed in lung, bladder, and vas deferens. Telokin is expressed in smooth muscle cells of the gut, reproductive tract and urinary tract, including in uterus, vas deferens, bladder, colon, kidney, ureter and ovary. Telokin is also detected in the trachea.

The protein resides in the cytoplasm. The protein localises to the cell projection. It is found in the lamellipodium. It localises to the cleavage furrow. Its subcellular location is the cytoskeleton. The protein resides in the stress fiber. It carries out the reaction L-seryl-[myosin light chain] + ATP = O-phospho-L-seryl-[myosin light chain] + ADP + H(+). It catalyses the reaction L-threonyl-[myosin light chain] + ATP = O-phospho-L-threonyl-[myosin light chain] + ADP + H(+). In terms of biological role, calcium/calmodulin-dependent myosin light chain kinase implicated in smooth muscle contraction via phosphorylation of myosin light chains (MLC). Also regulates actin-myosin interaction through a non-kinase activity. Phosphorylates PTK2B/PYK2 and myosin light-chains. Involved in the inflammatory response (e.g. apoptosis, vascular permeability, leukocyte diapedesis), cell motility and morphology, airway hyperreactivity and other activities relevant to asthma. Required for tonic airway smooth muscle contraction that is necessary for physiological and asthmatic airway resistance. Necessary for gastrointestinal motility. Implicated in the regulation of endothelial as well as vascular permeability, probably via the regulation of cytoskeletal rearrangements. In the nervous system it has been shown to control the growth initiation of astrocytic processes in culture and to participate in transmitter release at synapses formed between cultured sympathetic ganglion cells. Critical participant in signaling sequences that result in fibroblast apoptosis. Plays a role in the regulation of epithelial cell survival. Required for epithelial wound healing, especially during actomyosin ring contraction during purse-string wound closure. Mediates RhoA-dependent membrane blebbing. Triggers TRPC5 channel activity in a calcium-dependent signaling, by inducing its subcellular localization at the plasma membrane. Promotes cell migration (including tumor cells) and tumor metastasis. PTK2B/PYK2 activation by phosphorylation mediates ITGB2 activation and is thus essential to trigger neutrophil transmigration during acute lung injury (ALI). May regulate optic nerve head astrocyte migration. Probably involved in mitotic cytoskeletal regulation. Regulates tight junction probably by modulating ZO-1 exchange in the perijunctional actomyosin ring. Mediates burn-induced microvascular barrier injury; triggers endothelial contraction in the development of microvascular hyperpermeability by phosphorylating MLC. Essential for intestinal barrier dysfunction. Mediates Giardia spp.-mediated reduced epithelial barrier function during giardiasis intestinal infection via reorganization of cytoskeletal F-actin and tight junctional ZO-1. Necessary for hypotonicity-induced Ca(2+) entry and subsequent activation of volume-sensitive organic osmolyte/anion channels (VSOAC) in cervical cancer cells. The chain is Myosin light chain kinase, smooth muscle from Mus musculus (Mouse).